The chain runs to 525 residues: Acyl-CoA-binding domain-containing protein 5 (525 aa).

The region spanning 43 to 132 is the ACB domain; that stretch reads HETRFEAAVK…MKKIIETMPM (90 aa). An acyl-CoA is bound by residues 54-63, 74-78, K100, and Y119; these read IQSLPKNGSF and YSFYK. Positions 157-216 are disordered; that stretch reads RSSDITSDLDNVLTSTPNAKTVNGKAESSDSGAESEEEEAQEEVKGAEQSDNDKKMMKKS. Over residues 158-177 the composition is skewed to polar residues; it reads SSDITSDLDNVLTSTPNAKT. Residues 181–210 are a coiled coil; that stretch reads KAESSDSGAESEEEEAQEEVKGAEQSDNDK. Residues S184, S185, S187, S191, S206, S270, and S304 each carry the phosphoserine modification. A compositionally biased stretch (basic and acidic residues) spans 198–216; it reads EEVKGAEQSDNDKKMMKKS. Residues 367-376 are compositionally biased toward basic and acidic residues; the sequence is EVKHGGEDGR. Residues 367 to 433 form a disordered region; that stretch reads EVKHGGEDGR…ERWGSDRGSR (67 aa). The residue at position 419 (S419) is a Phosphoserine. A compositionally biased stretch (basic and acidic residues) spans 422–432; it reads DGERWGSDRGS. A coiled-coil region spans residues 438–467; it reads EQIALVLMRLQEDMQNVLQRLQKLETLTAL. K460 is subject to N6-acetyllysine. A helical membrane pass occupies residues 489–509; that stretch reads WWPFEMSPGVLTFAIIWPFIA.

Belongs to the ATG37 family.

It is found in the peroxisome membrane. In terms of biological role, acyl-CoA binding protein which acts as the peroxisome receptor for pexophagy but is dispensable for aggrephagy and nonselective autophagy. Binds medium- and long-chain acyl-CoA esters. The chain is Acyl-CoA-binding domain-containing protein 5 (ACBD5) from Pongo abelii (Sumatran orangutan).